A 1002-amino-acid chain; its full sequence is TOG array regulator of axonemal microtubules protein 2 (1002 aa).

5 disordered regions span residues 54–74 (SSVLPSSEKPSQLSREHEDQS), 131–214 (KRRL…SAQE), 332–351 (ETRSLENEEDQKESSTKVQV), 402–421 (PLRGSGALSEPAGMSSPRRN), and 426–450 (LQRKRANRASLPSIPVSKQEPGFAR).

It belongs to the Crescerin family.

The chain is TOG array regulator of axonemal microtubules protein 2 (Togaram2) from Mus musculus (Mouse).